A 195-amino-acid polypeptide reads, in one-letter code: Interferon omega-1 (195 aa).

Residues 1–21 constitute a signal peptide (or 23 in some molecules); sequence MALLFPLLAALVMTSYSPVGS. Disulfide bonds link cysteine 24/cysteine 122 and cysteine 52/cysteine 162. The N-linked (GlcNAc...) asparagine glycan is linked to asparagine 101.

Belongs to the alpha/beta interferon family.

It localises to the secreted. The chain is Interferon omega-1 (IFNW1) from Homo sapiens (Human).